The sequence spans 398 residues: MARNIKVEELLQTPIEKQRIELVERKGIGHPDSISDGLAEAVSRALCREYISKCGTVLHHNTDETQIVAGRSSPKFGGGEVLQPIYMLLVGRATKEFEGVELATESVALQAARNYLRKTMVNMDLERDVIMDCKLGTGSSDLRDVFKRDRVPVANDTSFGVGHAPFSELENIVYNTERRLLTDLKSRMPAIGEDMKVMGLRDGEDIALTICSGMIGKYIDDLDSYINMTQEMKIYVEELATHYTERDVNVYINTGDNLKTSCVFLTVTGTSAEMGDDGSVGRGNRCNGLITPNRPMSMEATSGKNPINHIGKIYNLLSTQMARDIVKQVPEVQDVYIRLLSQIAKPIDQPLVASAQIIPKEGTSFEKVKSEAEVVIDDWLSNVTKITEMVIRGELNTF.

136 to 141 (GTGSSD) contacts ATP.

It belongs to the AdoMet synthase 2 family. The cofactor is Mg(2+).

The catalysed reaction is L-methionine + ATP + H2O = S-adenosyl-L-methionine + phosphate + diphosphate. It participates in amino-acid biosynthesis; S-adenosyl-L-methionine biosynthesis; S-adenosyl-L-methionine from L-methionine: step 1/1. Catalyzes the formation of S-adenosylmethionine from methionine and ATP. This chain is S-adenosylmethionine synthase, found in Methanosarcina acetivorans (strain ATCC 35395 / DSM 2834 / JCM 12185 / C2A).